The chain runs to 76 residues: Conotoxin VnMEKL-0111 (76 aa).

The N-terminal stretch at 1–18 (MKLTILFLVAAVLMSTQA) is a signal peptide. The propeptide occupies 19-45 (LIQHDGEKSQKAKMKFLTARTLSAKTR). Disulfide bonds link Cys49-Cys65, Cys56-Cys70, and Cys64-Cys74.

This sequence belongs to the conotoxin O2 superfamily. In terms of tissue distribution, expressed by the venom duct.

It localises to the secreted. The protein is Conotoxin VnMEKL-0111 of Conus ventricosus (Mediterranean cone).